The chain runs to 336 residues: Small ribosomal subunit protein uS9m (336 aa).

Residues 32-81 (STTTTTTTTTTTTTSDEIPTTKPRFQSRFRRNQQPHQQQRSPYTSSQVTE) are disordered. The segment covering 33 to 45 (TTTTTTTTTTTTT) has biased composition (low complexity). Positions 65–81 (QPHQQQRSPYTSSQVTE) are enriched in polar residues.

This sequence belongs to the universal ribosomal protein uS9 family. As to quaternary structure, component of the mitochondrial small ribosomal subunit (mt-SSU).

The protein resides in the mitochondrion. In terms of biological role, component of the mitochondrial ribosome (mitoribosome), a dedicated translation machinery responsible for the synthesis of mitochondrial genome-encoded proteins, including at least some of the essential transmembrane subunits of the mitochondrial respiratory chain. The mitoribosomes are attached to the mitochondrial inner membrane and translation products are cotranslationally integrated into the membrane. This is Small ribosomal subunit protein uS9m (MRPS9) from Candida albicans (strain SC5314 / ATCC MYA-2876) (Yeast).